Consider the following 117-residue polypeptide: UPF0342 protein BcerKBAB4_0767 (117 aa).

It belongs to the UPF0342 family.

The polypeptide is UPF0342 protein BcerKBAB4_0767 (Bacillus mycoides (strain KBAB4) (Bacillus weihenstephanensis)).